Reading from the N-terminus, the 402-residue chain is Secondary metabolism regulator laeA (402 aa).

Residues 1–70 (MSLKYYLNDL…MSPTEVCSTD (70 aa)) form a disordered region. Residues 11-21 (SDSDSESESEC) are compositionally biased toward acidic residues.

The protein belongs to the methyltransferase superfamily. LaeA methyltransferase family.

The protein localises to the nucleus. It carries out the reaction L-methionyl-[protein] + S-adenosyl-L-methionine = S-methyl-L-methionyl-[protein] + S-adenosyl-L-homocysteine. In terms of biological role, methyltransferase that performs automethylation. No other methyl-accepting substrate has been identified yet. Acts as a global regulator for secondary metabolite gene expression. Negatively regulates the production of coprinoferrin, a structurally novel acylated tripeptide hydroxamate siderophore. The chain is Secondary metabolism regulator laeA from Coprinopsis cinerea (strain Okayama-7 / 130 / ATCC MYA-4618 / FGSC 9003) (Inky cap fungus).